A 759-amino-acid polypeptide reads, in one-letter code: Olfactomedin-like protein 2B (759 aa).

The N-terminal stretch at 1–20 is a signal peptide; sequence MAKSLLLVLCFALVTTLGWG. Coiled coils occupy residues 40–68 and 179–209; these read TEDE…KVKA and KLEE…MNKR. Asparagine 187 and asparagine 213 each carry an N-linked (GlcNAc...) asparagine glycan. Disordered regions lie at residues 346–396 and 456–494; these read TRRP…VSAS and THTA…EEED. Low complexity predominate over residues 356–396; it reads AAVTADAGTTSAGTPTTALPSARLPASTAAPSTPDPAVSAS. An Olfactomedin-like domain is found at 502–759; the sequence is RCKDTLSTIT…QVTYHVIFAY (258 aa). Residues cysteine 503 and cysteine 689 are joined by a disulfide bond. N-linked (GlcNAc...) asparagine glycosylation occurs at asparagine 704.

Homodimer. Binds to heparin and chondroitin sulfate E. Post-translationally, O-glycosylated and N-glycosylated.

The protein resides in the secreted. The sequence is that of Olfactomedin-like protein 2B (OLFML2B) from Bos taurus (Bovine).